The primary structure comprises 375 residues: uncharacterized protein (375 aa).

The region spanning 78–302 (KKIEITSTIH…IFPNIRITSP (225 aa)) is the Radical SAM core domain. [4Fe-4S] cluster contacts are provided by Cys92, Cys98, and Cys101.

It depends on [4Fe-4S] cluster as a cofactor.

This is an uncharacterized protein from Methanocaldococcus jannaschii (strain ATCC 43067 / DSM 2661 / JAL-1 / JCM 10045 / NBRC 100440) (Methanococcus jannaschii).